A 225-amino-acid chain; its full sequence is Helicostatins (225 aa).

The first 18 residues, 1 to 18, serve as a signal peptide directing secretion; sequence MLYSSLPVCFLVLGAALC. Residues 19-48 constitute a propeptide that is removed on maturation; that stretch reads APERMQNEAEPHDLQPHEAEPHSDHVAPLA. Residues Leu58, Leu79, and Leu90 each carry the leucine amide modification. Residues 94–127 constitute a propeptide that is removed on maturation; sequence SVDEDQSNDEQQLTTSDLDQAALAELFDQYDDAE. Leucine amide is present on Leu137. The propeptide occupies 141-149; the sequence is FADDETSEE. 5 positions are modified to leucine amide: Leu159, Leu170, Leu181, Leu192, and Leu206. The tract at residues 205 to 225 is disordered; sequence GLGKRSGDDVSADDSDNYFDV. The propeptide occupies 210 to 225; sequence SGDDVSADDSDNYFDV. Positions 214–225 are enriched in acidic residues; sequence VSADDSDNYFDV.

This sequence belongs to the allatostatin family. In terms of tissue distribution, highly expressed in the CNS and gut of larvae. Also expressed in the cells of the larval brain and ventral nerve cord and in endocrine cells of the midgut.

It is found in the secreted. Its function is as follows. May act as a neurotransmitter or neuromodulator. This chain is Helicostatins, found in Helicoverpa armigera (Cotton bollworm).